We begin with the raw amino-acid sequence, 224 residues long: Claudin-17 (224 aa).

The Cytoplasmic portion of the chain corresponds to 1–7; that stretch reads MAFYPLQ. The helical transmembrane segment at 8–28 threads the bilayer; it reads IAGLVLGFLGMVGTLATTLLP. Residues 29-81 lie on the Extracellular side of the membrane; sequence QWRVSAFVGSNIIVFERLWEGLWMNCIRQARVRLQCKFYSSLLALPPALETAR. A helical transmembrane segment spans residues 82-102; that stretch reads ALMCVAVALSLIALLIGICGM. Topologically, residues 103–124 are cytoplasmic; that stretch reads KQVQCTGSNERAKAYLLGTSGV. The helical transmembrane segment at 125–145 threads the bilayer; sequence LFILTGIFVLIPVSWTANIII. At 146-164 the chain is on the extracellular side; it reads RDFYNPAIHIGQKRELGAA. A helical membrane pass occupies residues 165 to 185; that stretch reads LFLGWASAAVLFIGGGLLCGF. Topologically, residues 186–224 are cytoplasmic; it reads CCCNRKKQGYRYPVPGYRVPHTDKRRNTTMLSKTSTSYV.

Belongs to the claudin family. Cannot form tight junction strands on its own. Interacts with OCLN. In the kidney, expressed in the proximal tubule and in the Henle's loop. In the distal convoluted tubule, not expressed in all tubules. Not detected in the collecting duct (at protein level).

Its subcellular location is the cell junction. The protein localises to the tight junction. It is found in the basolateral cell membrane. The catalysed reaction is chloride(in) = chloride(out). The enzyme catalyses hydrogencarbonate(in) = hydrogencarbonate(out). It catalyses the reaction bromide(in) = bromide(out). It carries out the reaction iodide(out) = iodide(in). The catalysed reaction is fluoride(in) = fluoride(out). The enzyme catalyses nitrate(in) = nitrate(out). It catalyses the reaction thiocyanate(in) = thiocyanate(out). Functionally, channel-forming tight junction protein with selectivity for anions, including chloride and hydrogencarbonate, and for solutes smaller than 9 Angstrom in diameter. In the kidney proximal tubule, may be involved in paracellular reabsorption of filtered anions. Does not affect water permeability. This chain is Claudin-17 (CLDN17), found in Homo sapiens (Human).